A 429-amino-acid chain; its full sequence is Citrate synthase, plasmid (429 aa).

Residues His-306 and Asp-364 contribute to the active site.

It belongs to the citrate synthase family.

The catalysed reaction is oxaloacetate + acetyl-CoA + H2O = citrate + CoA + H(+). It functions in the pathway carbohydrate metabolism; tricarboxylic acid cycle; isocitrate from oxaloacetate: step 1/2. Functionally, the exact function of the plasmid-encoded citrate synthase is not clear, it could help nodulation by allowing the bacteria to use citrate as a chelator of iron and calcium. In Rhizobium tropici, this protein is Citrate synthase, plasmid (pcsA).